Consider the following 119-residue polypeptide: Large ribosomal subunit protein bL20 (119 aa).

It belongs to the bacterial ribosomal protein bL20 family.

Binds directly to 23S ribosomal RNA and is necessary for the in vitro assembly process of the 50S ribosomal subunit. It is not involved in the protein synthesizing functions of that subunit. The polypeptide is Large ribosomal subunit protein bL20 (Streptococcus uberis (strain ATCC BAA-854 / 0140J)).